We begin with the raw amino-acid sequence, 392 residues long: Formate-dependent phosphoribosylglycinamide formyltransferase (392 aa).

Residues E22–L23 and E82 contribute to the N(1)-(5-phospho-beta-D-ribosyl)glycinamide site. ATP-binding positions include R114, K155, S160–Q165, E195–V198, and E203. In terms of domain architecture, ATP-grasp spans R119 to L308. Residues E267 and E279 each coordinate Mg(2+). Residues D286, K355, and R362 to R363 each bind N(1)-(5-phospho-beta-D-ribosyl)glycinamide.

Belongs to the PurK/PurT family. As to quaternary structure, homodimer.

The catalysed reaction is N(1)-(5-phospho-beta-D-ribosyl)glycinamide + formate + ATP = N(2)-formyl-N(1)-(5-phospho-beta-D-ribosyl)glycinamide + ADP + phosphate + H(+). Its pathway is purine metabolism; IMP biosynthesis via de novo pathway; N(2)-formyl-N(1)-(5-phospho-D-ribosyl)glycinamide from N(1)-(5-phospho-D-ribosyl)glycinamide (formate route): step 1/1. Functionally, involved in the de novo purine biosynthesis. Catalyzes the transfer of formate to 5-phospho-ribosyl-glycinamide (GAR), producing 5-phospho-ribosyl-N-formylglycinamide (FGAR). Formate is provided by PurU via hydrolysis of 10-formyl-tetrahydrofolate. This chain is Formate-dependent phosphoribosylglycinamide formyltransferase, found in Cronobacter sakazakii (strain ATCC BAA-894) (Enterobacter sakazakii).